Reading from the N-terminus, the 1021-residue chain is Outer capsid protein P3 (1021 aa).

It belongs to the phytoreovirus inner capsid protein P3 family. In terms of assembly, homodimer. Homomultimer.

Its subcellular location is the virion. It localises to the host cytoplasm. Its function is as follows. Capsid protein which self-assembles to form the inner icosahedral capsid with a T=2 symmetry, and consisting of 60 P3 dimers. The protein is Outer capsid protein P3 of Nephotettix cincticeps (Green rice leafhopper).